Here is a 619-residue protein sequence, read N- to C-terminus: DNA mismatch repair protein MutL (619 aa).

Belongs to the DNA mismatch repair MutL/HexB family.

In terms of biological role, this protein is involved in the repair of mismatches in DNA. It is required for dam-dependent methyl-directed DNA mismatch repair. May act as a 'molecular matchmaker', a protein that promotes the formation of a stable complex between two or more DNA-binding proteins in an ATP-dependent manner without itself being part of a final effector complex. This chain is DNA mismatch repair protein MutL, found in Xylella fastidiosa (strain M23).